An 889-amino-acid polypeptide reads, in one-letter code: Protein argonaute 15 (889 aa).

Disordered stretches follow at residues 1–26 and 119–150; these read MESHGDEGEPSAMAKPPKKLPMSRKG and EDASSSGRTTTRRSSGGDDGSPGGSDRKRMKR. A compositionally biased stretch (low complexity) spans 122–132; sequence SSSGRTTTRRS. One can recognise a PAZ domain in the interval 264-379; sequence PVIEFLLFNQ…IPLELCHLVP (116 aa). The Piwi domain occupies 546–853; the sequence is FVLCVLPERK…AAAQVSQFVR (308 aa). The tract at residues 857 to 878 is disordered; the sequence is AASEGSGDGGAPPRPVPELPRL.

The protein belongs to the argonaute family. Ago subfamily.

Its function is as follows. Probably involved in the RNA silencing pathway. May bind to short RNAs such as microRNAs (miRNAs) or short interfering RNAs (siRNAs), and represses the translation of mRNAs which are complementary to them. The chain is Protein argonaute 15 (AGO15) from Oryza sativa subsp. japonica (Rice).